Reading from the N-terminus, the 946-residue chain is Calcium-transporting ATPase type 2C member 2 (946 aa).

The Cytoplasmic segment spans residues 1 to 106 (MVEGRVSEFL…DNSEPVWKKY (106 aa)). An interaction with ORAI1 region spans residues 71–95 (VDLHTGLSEFSVTQRRLAHGWNEFV). The helical transmembrane segment at 107–127 (LDQFKNPLILLLLGSALVSVL) threads the bilayer. The Extracellular segment spans residues 128–129 (TK). A helical membrane pass occupies residues 130–150 (EYEDAVSIATAVLVVVTVAFI). Topologically, residues 151 to 231 (QEYRSEKSLE…EAEPCSKTDS (81 aa)) are cytoplasmic. Residues 232–252 (PLTGGGDLTTLSNIVFMGTLV) form a helical membrane-spanning segment. Over 253-293 (QYGRGQGVVIGTGESSQFGEVFKMMQAEETPKTPLQKSMDR) the chain is Extracellular. T264 carries the post-translational modification Phosphothreonine. A phosphoserine mark is found at S267 and S268. The chain crosses the membrane as a helical span at residues 294–314 (LGKQLTLFSFGIIGLIMLIGW). The Cytoplasmic segment spans residues 315 to 331 (SQGKQLLSMFTIGVSLA). V332, A333, I335, and E337 together coordinate Ca(2+). A helical membrane pass occupies residues 332-352 (VAAIPEGLPIVVMVTLVLGVL). Residues 353–750 (RMAKKRVIVK…ISALSLITLS (398 aa)) lie on the Extracellular side of the membrane. D379 acts as the 4-aspartylphosphate intermediate in catalysis. Residues D674 and D678 each contribute to the Mg(2+) site. Residues 751–771 (TVFNLPSPLNAMQILWINIIM) form a helical membrane-spanning segment. 2 residues coordinate Ca(2+): N768 and D772. Residues 772 to 804 (DGPPAQSLGVEPVDKDAFRQPPRSVRDTILSRA) are Cytoplasmic-facing. The chain crosses the membrane as a helical span at residues 805–825 (LILKILMSAAIIISGTLFIFW). At 826–837 (KEMPEDRASTPR) the chain is on the extracellular side. A helical transmembrane segment spans residues 838–855 (TTTMTFTCFVFFDLFNAL). Topologically, residues 856–874 (TCRSQTKLIFEIGFLRNHM) are cytoplasmic. Residues 875-895 (FLYSVLGSILGQLAVIYIPPL) traverse the membrane as a helical segment. Over 896–905 (QRVFQTENLG) the chain is Extracellular. Residues 906 to 926 (ALDLLFLTGLASSVFILSELL) form a helical membrane-spanning segment. The Cytoplasmic segment spans residues 927 to 946 (KLCEKYCCSPKRVQMHPEDV).

This sequence belongs to the cation transport ATPase (P-type) (TC 3.A.3) family. Type IIA subfamily. In terms of assembly, interacts (via N-terminus) with ORAI1 (via N- and C-termini); this interaction regulates Ca(2+) influx at the plasma membrane. As to expression, highly expressed in the gastrointestinal and respiratory tracts, prostate, thyroid, salivary, and mammary glands. Expressed in colon epithelial cells (at protein level). Expressed in brain and testis (at protein level).

It is found in the golgi apparatus. It localises to the trans-Golgi network membrane. The protein localises to the cell membrane. The protein resides in the basolateral cell membrane. The catalysed reaction is Ca(2+)(in) + ATP + H2O = Ca(2+)(out) + ADP + phosphate + H(+). It carries out the reaction Mn(2+)(in) + ATP + H2O = Mn(2+)(out) + ADP + phosphate + H(+). Its function is as follows. ATP-driven pump that supplies the Golgi apparatus with Ca(2+) and Mn(2+) ions, both essential cofactors for processing and trafficking of newly synthesized proteins in the secretory pathway. Within a catalytic cycle, acquires Ca(2+) or Mn(2+) ions on the cytoplasmic side of the membrane and delivers them to the lumenal side. The transfer of ions across the membrane is coupled to ATP hydrolysis and is associated with a transient phosphorylation that shifts the pump conformation from inward-facing to outward-facing state. Induces Ca(2+) influx independently of its ATP-driven pump function. At the basolateral membrane of mammary epithelial cells, interacts with Ca(2+) channel ORAI1 and mediates Ca(2+) entry independently of the Ca(2+) content of endoplasmic reticulum or Golgi stores. May facilitate transepithelial transport of large quantities of Ca(2+) for milk secretion via activation of Ca(2+) influx channels at the plasma membrane and active Ca(2+) transport at the Golgi apparatus. The protein is Calcium-transporting ATPase type 2C member 2 of Homo sapiens (Human).